The sequence spans 198 residues: Small ribosomal subunit protein uS4 (198 aa).

The segment at Leu26–Asn45 is disordered. The S4 RNA-binding domain occupies Ser91 to Leu154.

It belongs to the universal ribosomal protein uS4 family. As to quaternary structure, part of the 30S ribosomal subunit. Contacts protein S5. The interaction surface between S4 and S5 is involved in control of translational fidelity.

Its function is as follows. One of the primary rRNA binding proteins, it binds directly to 16S rRNA where it nucleates assembly of the body of the 30S subunit. With S5 and S12 plays an important role in translational accuracy. This is Small ribosomal subunit protein uS4 from Acholeplasma laidlawii (strain PG-8A).